A 78-amino-acid chain; its full sequence is Large ribosomal subunit protein bL28 (78 aa).

The tract at residues 1–26 (MARVCQVTGKRPMSGHNVSHANNKTK) is disordered.

The protein belongs to the bacterial ribosomal protein bL28 family.

This chain is Large ribosomal subunit protein bL28, found in Nitrosomonas europaea (strain ATCC 19718 / CIP 103999 / KCTC 2705 / NBRC 14298).